We begin with the raw amino-acid sequence, 180 residues long: UPF0303 protein PSEEN3311 (180 aa).

It belongs to the UPF0303 family.

This is UPF0303 protein PSEEN3311 from Pseudomonas entomophila (strain L48).